Consider the following 487-residue polypeptide: Serine carboxypeptidase-like 37 (487 aa).

Residues 1-28 (MVKQQDWSVTTCVLLFLFLASQIHCRSG) form the signal peptide. Asn-105 carries an N-linked (GlcNAc...) asparagine glycan. Disulfide bonds link Cys-120–Cys-368, Cys-280–Cys-291, and Cys-315–Cys-336. Ser-215 is an active-site residue. Residues Asn-317, Asn-357, and Asn-375 are each glycosylated (N-linked (GlcNAc...) asparagine). Residue Asp-407 is part of the active site. N-linked (GlcNAc...) asparagine glycans are attached at residues Asn-423 and Asn-449. Residue His-460 is part of the active site.

It belongs to the peptidase S10 family. In terms of tissue distribution, expressed in seedlings, roots, leaves, stems, flowers and siliques.

The protein resides in the secreted. Probable carboxypeptidase. The sequence is that of Serine carboxypeptidase-like 37 (SCPL37) from Arabidopsis thaliana (Mouse-ear cress).